Reading from the N-terminus, the 144-residue chain is 3-hydroxyacyl-[acyl-carrier-protein] dehydratase FabZ (144 aa).

His-51 is an active-site residue.

This sequence belongs to the thioester dehydratase family. FabZ subfamily.

Its subcellular location is the cytoplasm. The enzyme catalyses a (3R)-hydroxyacyl-[ACP] = a (2E)-enoyl-[ACP] + H2O. Its function is as follows. Involved in unsaturated fatty acids biosynthesis. Catalyzes the dehydration of short chain beta-hydroxyacyl-ACPs and long chain saturated and unsaturated beta-hydroxyacyl-ACPs. This Clostridium botulinum (strain Langeland / NCTC 10281 / Type F) protein is 3-hydroxyacyl-[acyl-carrier-protein] dehydratase FabZ.